The following is a 425-amino-acid chain: Glucan 1,3-beta-glucosidase (425 aa).

The N-terminal stretch at 1-17 is a signal peptide; the sequence is MLLTFAPIFLLISSIVA. The active-site Proton donor is the E214. 2 disulfide bridges follow: C301–C423 and C326–C352. The Nucleophile role is filled by K328.

This sequence belongs to the glycosyl hydrolase 5 (cellulase A) family.

It is found in the secreted. It catalyses the reaction Successive hydrolysis of beta-D-glucose units from the non-reducing ends of (1-&gt;3)-beta-D-glucans, releasing alpha-glucose.. In terms of biological role, beta-glucanases participate in the metabolism of beta-glucan, the main structural component of the cell wall. It could also function biosynthetically as a transglycosylase. The sequence is that of Glucan 1,3-beta-glucosidase (EXG1) from Candida oleophila (Yeast).